The sequence spans 689 residues: MTDKTFLVEIGTEELPPKALRSLAESFAANLTAELDAAGLAHGEVSWFAAPRRLALKVANLSAAQPDREVEKRGPAIQAAFDANGVATKAAEGWARGCGITVDQAERLSTDKGEWLMYRARVTGERTQVLLPAMIATSLAKLPIPKLMRWGASEVQFVRPVHTVTLLLGDELIPANILGIDSARIIRGHRFMGEPEFTIDHADQYPQILLERGKVQADYAARKAIIKADAEAAAAKIGGVADLSDSLLEEVTSLVEWPVVLTATFEEKFLAVPAEALVYTMKGDQKYFPVYDKAGKLLPNFIFVTNIESKDPQQIISGNEKVVRPRLADAEFFFNSDRKRRLEDNLPRLETVLFQKELGTLRAKTDRIQALAGWVAAQIGADVNHATRAGLLSKCDLMTNMVFEFTDTQGVMGMHYARHDGEAEDVAVALNEQYQPRFAGDELPSNPVACALAIADKMDTLAGIFGIGQHPKGDKDPFALRRAALGVLRIIVEKNLPLDLQTLTEEAVRLYGSKLSNAKAVDEVVDFMLGRFRTWYQEEGHSVDTLQAVLARRPTRPADFDARMKAVSHFRTLEQAASLAAANKRVSNILAKATEPLNDSVQASLLKENEEIKLATYVTALSSKLQPFFAEGRYQDALIELAQLREAVDNFFDKVMVNAEEKEVRINRLTLLAKLRELFLQVADISLLQ.

Belongs to the class-II aminoacyl-tRNA synthetase family. Tetramer of two alpha and two beta subunits.

Its subcellular location is the cytoplasm. The catalysed reaction is tRNA(Gly) + glycine + ATP = glycyl-tRNA(Gly) + AMP + diphosphate. The polypeptide is Glycine--tRNA ligase beta subunit (Erwinia tasmaniensis (strain DSM 17950 / CFBP 7177 / CIP 109463 / NCPPB 4357 / Et1/99)).